Consider the following 504-residue polypeptide: Ammonium transporter 1 member 4 (504 aa).

The next 12 membrane-spanning stretches (helical) occupy residues 12–32, 55–75, 90–110, 136–156, 161–181, 207–227, 251–271, 292–314, 318–338, 344–364, 377–397, and 430–450; these read LIPLLSGGANATAAAAAAEYI, LLFSAYLVFAMQLGFAMLCAG, VIDAAAGGLFYYLFGFAFAFG, YFLYQWTFAIAAAGITSGSIA, FVAYLIYSSFLTGLVYPIVSH, FAGSGVVHMVGGIAGLWGALI, LVVLGTFLLWFGWYGFNPGSF, AVGRTAVTTTLAGCTAALTTLFG, IDGYWNVTDVCNGLLGGFAAI, VVEPWAALVCGFVAAWVLMGC, LEAAQLHGGCGAWGIIFTGLF, and VVQILVITGWVSVTMGTLFFI. Phosphothreonine is present on threonine 471.

Belongs to the ammonia transporter channel (TC 1.A.11.2) family. In terms of tissue distribution, specifically expressed in pollen grains and tubes.

The protein resides in the cell membrane. Functionally, high affinity ammonium transporter in the plasma membrane. This chain is Ammonium transporter 1 member 4 (AMT1-4), found in Arabidopsis thaliana (Mouse-ear cress).